Here is a 167-residue protein sequence, read N- to C-terminus: 2-C-methyl-D-erythritol 2,4-cyclodiphosphate synthase (167 aa).

A divalent metal cation is bound by residues Asp8 and His10. Residues 8 to 10 and 34 to 35 contribute to the 4-CDP-2-C-methyl-D-erythritol 2-phosphate site; these read DIH and HS. His42 is an a divalent metal cation binding site. Residues 56 to 58 and Arg142 each bind 4-CDP-2-C-methyl-D-erythritol 2-phosphate; that span reads DIG.

This sequence belongs to the IspF family. As to quaternary structure, homotrimer. The cofactor is a divalent metal cation.

It carries out the reaction 4-CDP-2-C-methyl-D-erythritol 2-phosphate = 2-C-methyl-D-erythritol 2,4-cyclic diphosphate + CMP. It participates in isoprenoid biosynthesis; isopentenyl diphosphate biosynthesis via DXP pathway; isopentenyl diphosphate from 1-deoxy-D-xylulose 5-phosphate: step 4/6. Functionally, involved in the biosynthesis of isopentenyl diphosphate (IPP) and dimethylallyl diphosphate (DMAPP), two major building blocks of isoprenoid compounds. Catalyzes the conversion of 4-diphosphocytidyl-2-C-methyl-D-erythritol 2-phosphate (CDP-ME2P) to 2-C-methyl-D-erythritol 2,4-cyclodiphosphate (ME-CPP) with a corresponding release of cytidine 5-monophosphate (CMP). This Buchnera aphidicola subsp. Schizaphis graminum (strain Sg) protein is 2-C-methyl-D-erythritol 2,4-cyclodiphosphate synthase.